The following is a 120-amino-acid chain: UPF0102 protein Daro_0503 (120 aa).

A disordered region spans residues 1 to 20; that stretch reads MQVKANDTTTARGREAEDRA.

Belongs to the UPF0102 family.

This is UPF0102 protein Daro_0503 from Dechloromonas aromatica (strain RCB).